Here is an 84-residue protein sequence, read N- to C-terminus: Small ribosomal subunit protein eS27z (84 aa).

The segment at 39–61 (CQGCFNITTVFSHSQTVVMCGNC) adopts a C4-type zinc-finger fold.

This sequence belongs to the eukaryotic ribosomal protein eS27 family. In terms of assembly, (Microbial infection) May interact with Tomato yellow leaf curl virus (TYLCV) and papaya leaf curl China virus (PaLcuCNV) C2 proteins. This interaction prevents activation of Jasmonate signaling, thereby facilitating viral uptake by insects vectors. The cofactor is Zn(2+).

In Arabidopsis thaliana (Mouse-ear cress), this protein is Small ribosomal subunit protein eS27z (RPS27A).